The sequence spans 569 residues: Synaptotagmin-4 (569 aa).

Residues 1-21 (MGFLFGLFIGIAVSFGLVVAF) traverse the membrane as a helical segment. The SMP-LTD domain occupies 67-251 (QRQKLNWLNL…WPVRKIIPIL (185 aa)). Positions 229 to 531 (EETIRDAIED…KIGRVIMTLT (303 aa)) are phospholipid binding. C2 domains follow at residues 245-366 (RKII…DIWL) and 426-543 (TDMK…QEWF). 5 residues coordinate Ca(2+): D459, D465, D514, D516, and D521.

This sequence belongs to the synaptotagmin family. Requires Ca(2+) as cofactor.

The protein resides in the membrane. May be involved in membrane trafficking. This chain is Synaptotagmin-4 (SYT4), found in Arabidopsis thaliana (Mouse-ear cress).